We begin with the raw amino-acid sequence, 799 residues long: RasGAP-activating-like protein 1 (799 aa).

C2 domains are found at residues 1–105 and 116–231; these read MAKS…DSWI and VQGE…NGWF. Ca(2+) contacts are provided by aspartate 21, aspartate 27, aspartate 74, aspartate 76, aspartate 82, aspartate 149, aspartate 155, aspartate 202, aspartate 204, and aspartate 210. Residues 316-544 enclose the Ras-GAP domain; the sequence is GLAGPFLDYL…SRVRDFLDQL (229 aa). Threonine 400 is subject to Phosphothreonine. The region spanning 565–672 is the PH domain; the sequence is TIVREGFLLK…WLSALRKASA (108 aa). The Btk-type zinc-finger motif lies at 674-710; the sequence is NPGKLVACHPGAFRSGRWTCCLQAERSAAGCSRTHSA. The Zn(2+) site is built by histidine 682, cysteine 693, cysteine 694, and cysteine 704.

Ca(2+) is required as a cofactor.

Probable inhibitory regulator of the Ras-cyclic AMP pathway. Plays a role in dendrite formation by melanocytes. This is RasGAP-activating-like protein 1 from Mus musculus (Mouse).